Consider the following 328-residue polypeptide: Malate dehydrogenase (328 aa).

Position 11 to 17 (11 to 17 (GAAGQIG)) interacts with NAD(+). Arg94 and Arg100 together coordinate substrate. NAD(+) contacts are provided by residues Asn107, Gln114, and 131–133 (VGN). Substrate is bound by residues Asn133 and Arg164. The Proton acceptor role is filled by His189.

It belongs to the LDH/MDH superfamily. MDH type 2 family.

It catalyses the reaction (S)-malate + NAD(+) = oxaloacetate + NADH + H(+). Functionally, catalyzes the reversible oxidation of malate to oxaloacetate. The polypeptide is Malate dehydrogenase (Xanthomonas euvesicatoria pv. vesicatoria (strain 85-10) (Xanthomonas campestris pv. vesicatoria)).